The chain runs to 27 residues: Superoxide dismutase [Mn] (27 aa).

It belongs to the iron/manganese superoxide dismutase family. Homodimer. Mn(2+) is required as a cofactor.

It catalyses the reaction 2 superoxide + 2 H(+) = H2O2 + O2. Functionally, destroys superoxide anion radicals which are normally produced within the cells and which are toxic to biological systems. The protein is Superoxide dismutase [Mn] (sodA) of Desulfovibrio desulfuricans.